Reading from the N-terminus, the 209-residue chain is MICOS complex subunit mic19 (209 aa).

Coiled-coil stretches lie at residues 48–86 (LELEIQNRVAKELERLRAREQQTLAEIEKRLSEAKDTGS) and 127–156 (EVAAVNKELNRESVNSEIEELRVKLEGRKK).

The protein belongs to the MICOS complex subunit Mic19 family. In terms of assembly, component of the mitochondrial contact site and cristae organizing system (MICOS) complex.

The protein resides in the mitochondrion inner membrane. Component of the MICOS complex, a large protein complex of the mitochondrial inner membrane that plays crucial roles in the maintenance of crista junctions, inner membrane architecture, and formation of contact sites to the outer membrane. Involved in osmoadaptation. In Emericella nidulans (strain FGSC A4 / ATCC 38163 / CBS 112.46 / NRRL 194 / M139) (Aspergillus nidulans), this protein is MICOS complex subunit mic19.